The following is a 335-amino-acid chain: Glycerol-3-phosphate dehydrogenase [NAD(P)+] (335 aa).

3 residues coordinate NADPH: S12, W13, and K107. Residues K107, G138, and S140 each coordinate sn-glycerol 3-phosphate. A142 lines the NADPH pocket. Sn-glycerol 3-phosphate-binding residues include K193, D246, S256, R257, and N258. K193 acts as the Proton acceptor in catalysis. R257 lines the NADPH pocket. Positions 281 and 283 each coordinate NADPH.

It belongs to the NAD-dependent glycerol-3-phosphate dehydrogenase family.

The protein resides in the cytoplasm. The catalysed reaction is sn-glycerol 3-phosphate + NAD(+) = dihydroxyacetone phosphate + NADH + H(+). It carries out the reaction sn-glycerol 3-phosphate + NADP(+) = dihydroxyacetone phosphate + NADPH + H(+). The protein operates within membrane lipid metabolism; glycerophospholipid metabolism. Functionally, catalyzes the reduction of the glycolytic intermediate dihydroxyacetone phosphate (DHAP) to sn-glycerol 3-phosphate (G3P), the key precursor for phospholipid synthesis. This chain is Glycerol-3-phosphate dehydrogenase [NAD(P)+], found in Citrifermentans bemidjiense (strain ATCC BAA-1014 / DSM 16622 / JCM 12645 / Bem) (Geobacter bemidjiensis).